A 430-amino-acid chain; its full sequence is MIRSIIALMLSFALVPFAFASDRLTVKHHEIDIRVAIPLVADFCGRSVVLGPSIQGVVSLDFDDVPCSQAFDLLLESNHLLSSMVGDVLVITAMDQVLNSERKADDLRTFRRDLFNANDIERRVINIVHASASEVVSLFKESFMSLDAPGMSMTVDERTNSVFAALPSSFFPALESVIQAIDVPVRQVAIEANVVEASVDWSKRLGLNWGGALSLGNWSAVTAGDLSVAAGSSIGFGFLSNTLSLDGLFTAMENEGNGRVVSRPTLLTLDRQSASVLRGTELPYQQSAGDGATSVAFKHAALSLEVKPVISPDNSIVIEVLVSRDSPNFSNAIDGVPPIDTNRLVTTIRVPHGQTVVLGGVYSTINQQGSSRVSGISRIPGIGRLFKKKEHVTEQYELLIFLTPRILGLEVEPEKQSLVFDESFFLGDLF.

A signal peptide spans 1–20 (MIRSIIALMLSFALVPFAFA). The helical transmembrane segment at 226–245 (LSVAAGSSIGFGFLSNTLSL) threads the bilayer.

The protein resides in the host membrane. Its function is as follows. May play a role in phage assembly. The protein is Putative assembly protein ORF430 of Pseudomonas aeruginosa (Bacteriophage Pf3).